A 627-amino-acid polypeptide reads, in one-letter code: Chaperone protein HtpG (627 aa).

Residues 1–343 (MATQEFQAET…SEDLSLNISR (343 aa)) are a; substrate-binding. The interval 344–553 (EMLQQDKQLK…EGEISIEMEK (210 aa)) is b. The c stretch occupies residues 554–627 (VLQSMPNNQN…YTNNVCKIMS (74 aa)).

This sequence belongs to the heat shock protein 90 family. As to quaternary structure, homodimer.

The protein localises to the cytoplasm. Its function is as follows. Molecular chaperone. Has ATPase activity. The chain is Chaperone protein HtpG from Natranaerobius thermophilus (strain ATCC BAA-1301 / DSM 18059 / JW/NM-WN-LF).